A 302-amino-acid chain; its full sequence is Enoyl-CoA delta isomerase 1, mitochondrial (302 aa).

Residues methionine 1–arginine 41 constitute a mitochondrion transit peptide. Lysine 61 is modified (N6-acetyllysine; alternate). Position 61 is an N6-succinyllysine; alternate (lysine 61). Residue lysine 84 is modified to N6-succinyllysine. N6-acetyllysine is present on lysine 89. Substrate is bound by residues alanine 106–leucine 110, glycine 153, and asparagine 177. Lysine 283 bears the N6-acetyllysine; alternate mark. Lysine 283 bears the N6-succinyllysine; alternate mark. At lysine 288 the chain carries N6-succinyllysine.

It belongs to the enoyl-CoA hydratase/isomerase family. As to quaternary structure, homotrimer. In terms of tissue distribution, expressed in liver (at protein level).

The protein resides in the mitochondrion matrix. It carries out the reaction a (3Z)-enoyl-CoA = a 4-saturated (2E)-enoyl-CoA. It catalyses the reaction a (3E)-enoyl-CoA = a 4-saturated (2E)-enoyl-CoA. The catalysed reaction is (3Z)-octenoyl-CoA = (2E)-octenoyl-CoA. The enzyme catalyses (2E)-tetradecenoyl-CoA = (3Z)-tetradecenoyl-CoA. It carries out the reaction (3Z)-dodecenoyl-CoA = (2E)-dodecenoyl-CoA. It catalyses the reaction (3Z)-hexenoyl-CoA = (2E)-hexenoyl-CoA. The catalysed reaction is (3Z)-decenoyl-CoA = (2E)-decenoyl-CoA. It functions in the pathway lipid metabolism; fatty acid beta-oxidation. Its function is as follows. Key enzyme of fatty acid beta-oxidation. Able to isomerize both 3-cis (3Z) and 3-trans (3E) double bonds into the 2-trans (2E) form in a range of enoyl-CoA species, with a preference for (3Z)-enoyl-CoAs over (3E)-enoyl-CoAs. The catalytic efficiency of this enzyme is not affected by the fatty acyl chain length. This chain is Enoyl-CoA delta isomerase 1, mitochondrial (ECI1), found in Homo sapiens (Human).